The chain runs to 564 residues: Pyruvate decarboxylase (564 aa).

Positions 28 and 115 each coordinate pyruvate. Thiamine diphosphate-binding positions include threonine 390 and 413 to 415; that span reads GSI. Aspartate 444 contributes to the Mg(2+) binding site. Residues 445–446 and 471–476 each bind thiamine diphosphate; these read GS and NNGYTI. Residues asparagine 471 and glycine 473 each contribute to the Mg(2+) site. A pyruvate-binding site is contributed by glutamate 477.

The protein belongs to the TPP enzyme family. Homotetramer. Requires Mg(2+) as cofactor. Thiamine diphosphate serves as cofactor.

The catalysed reaction is a 2-oxocarboxylate + H(+) = an aldehyde + CO2. It carries out the reaction pyruvate + H(+) = acetaldehyde + CO2. This Hanseniaspora uvarum (Yeast) protein is Pyruvate decarboxylase (PDC).